The primary structure comprises 377 residues: MKNNIINLAQDLIRRPSISPADQGCQQVIAERLAQLGFTLEWLPFGDTLNLWAKHGSGSPVVAFAGHTDVVPVGDETQWTYPPFEARIVDNMLYGRGAADMKGSLSALVVAAEEFVKANPNHTGTVALLITSDEEAAAKDGTVKVVETLMARGEPIHYCVVGEPSSGKVLGDVIKNGRRGSITGELYIEGVQGHVAYPHLAENPVHTSLNFLTELTTYQWDNGNEFFPPTSLQIANIKAGTGSNNVIPGELYVQFNLRYCTEVTDEIIKNKVAEMLAKHQLKHRISWNLSGQPFLAGNGELVKATVQAVENVTKITPRLDTSGGTSDGRFIALMGAEVVEFGPLNATIHKVNECVSVEDLGKCGEVYYHILERLLKS.

His67 contacts Zn(2+). Residue Asp69 is part of the active site. Asp100 is a Zn(2+) binding site. Glu134 serves as the catalytic Proton acceptor. Positions 135, 163, and 349 each coordinate Zn(2+).

Belongs to the peptidase M20A family. DapE subfamily. Homodimer. Zn(2+) is required as a cofactor. Co(2+) serves as cofactor.

It catalyses the reaction N-succinyl-(2S,6S)-2,6-diaminopimelate + H2O = (2S,6S)-2,6-diaminopimelate + succinate. It participates in amino-acid biosynthesis; L-lysine biosynthesis via DAP pathway; LL-2,6-diaminopimelate from (S)-tetrahydrodipicolinate (succinylase route): step 3/3. Functionally, catalyzes the hydrolysis of N-succinyl-L,L-diaminopimelic acid (SDAP), forming succinate and LL-2,6-diaminopimelate (DAP), an intermediate involved in the bacterial biosynthesis of lysine and meso-diaminopimelic acid, an essential component of bacterial cell walls. In Actinobacillus pleuropneumoniae serotype 3 (strain JL03), this protein is Succinyl-diaminopimelate desuccinylase.